A 259-amino-acid polypeptide reads, in one-letter code: Bidirectional sugar transporter SWEET4 (259 aa).

Residues 1–10 (MVSPDTIRTA) lie on the Extracellular side of the membrane. The MtN3/slv 1 domain occupies 10-94 (AIGVVGNGTA…TYIALFLAFS (85 aa)). A helical membrane pass occupies residues 11-31 (IGVVGNGTALVLFLSPVPTFI). Topologically, residues 32–44 (RIWKKGSVEQYSA) are cytoplasmic. Residues 45-65 (VPYVATLLNCMMWVLYGLPAV) traverse the membrane as a helical segment. Residues 66 to 77 (HPHSMLVITING) lie on the Extracellular side of the membrane. N-linked (GlcNAc...) asparagine glycosylation occurs at N76. Residues 78–98 (TGMAIELTYIALFLAFSLGAV) form a helical membrane-spanning segment. Residues 99–101 (RRR) are Cytoplasmic-facing. The chain crosses the membrane as a helical span at residues 102–122 (VLLLLAAEVAFVAAVAALVLN). Residues 123 to 131 (LAHTHERRS) lie on the Extracellular side of the membrane. Residues 132–152 (MIVGILCVLFGTGMYAAPLSV) traverse the membrane as a helical segment. The 85-residue stretch at 133–217 (IVGILCVLFG…ILYAIYYKST (85 aa)) folds into the MtN3/slv 2 domain. The Cytoplasmic segment spans residues 153–165 (MKMVIQTKSVEYM). A helical membrane pass occupies residues 166–186 (PLFLSLASLVNGICWTAYALI). The Extracellular portion of the chain corresponds to 187–191 (RFDLY). The helical transmembrane segment at 192–212 (ITIPNGLGVMFAVAQLILYAI) threads the bilayer. Residues 213-259 (YYKSTQQIIEARKRKEADHVAMTDVVVDSAKNNPSSGAAAAAANGRY) lie on the Cytoplasmic side of the membrane.

This sequence belongs to the SWEET sugar transporter family. Forms homooligomers and/or heterooligomers.

Its subcellular location is the cell membrane. Mediates both low-affinity uptake and efflux of sugar across the plasma membrane. The polypeptide is Bidirectional sugar transporter SWEET4 (SWEET4) (Oryza sativa subsp. indica (Rice)).